Reading from the N-terminus, the 278-residue chain is 4-deoxy-L-threo-5-hexosulose-uronate ketol-isomerase (278 aa).

His196, His198, Glu203, and His245 together coordinate Zn(2+).

This sequence belongs to the KduI family. The cofactor is Zn(2+).

The catalysed reaction is 5-dehydro-4-deoxy-D-glucuronate = 3-deoxy-D-glycero-2,5-hexodiulosonate. Its pathway is glycan metabolism; pectin degradation; 2-dehydro-3-deoxy-D-gluconate from pectin: step 4/5. In terms of biological role, catalyzes the isomerization of 5-dehydro-4-deoxy-D-glucuronate to 3-deoxy-D-glycero-2,5-hexodiulosonate. The chain is 4-deoxy-L-threo-5-hexosulose-uronate ketol-isomerase from Paraburkholderia phytofirmans (strain DSM 17436 / LMG 22146 / PsJN) (Burkholderia phytofirmans).